The primary structure comprises 441 residues: 3-phosphoshikimate 1-carboxyvinyltransferase (441 aa).

The interval methionine 1–glycine 21 is disordered. The 3-phosphoshikimate site is built by lysine 29, serine 30, and arginine 34. Residue lysine 29 participates in phosphoenolpyruvate binding. Residues glycine 103 and arginine 132 each contribute to the phosphoenolpyruvate site. 3-phosphoshikimate contacts are provided by serine 177, glutamine 179, aspartate 328, and lysine 355. Glutamine 179 provides a ligand contact to phosphoenolpyruvate. Aspartate 328 acts as the Proton acceptor in catalysis. 2 residues coordinate phosphoenolpyruvate: arginine 359 and arginine 401.

This sequence belongs to the EPSP synthase family. Monomer.

It localises to the cytoplasm. It catalyses the reaction 3-phosphoshikimate + phosphoenolpyruvate = 5-O-(1-carboxyvinyl)-3-phosphoshikimate + phosphate. The protein operates within metabolic intermediate biosynthesis; chorismate biosynthesis; chorismate from D-erythrose 4-phosphate and phosphoenolpyruvate: step 6/7. Catalyzes the transfer of the enolpyruvyl moiety of phosphoenolpyruvate (PEP) to the 5-hydroxyl of shikimate-3-phosphate (S3P) to produce enolpyruvyl shikimate-3-phosphate and inorganic phosphate. The protein is 3-phosphoshikimate 1-carboxyvinyltransferase of Parasynechococcus marenigrum (strain WH8102).